A 96-amino-acid polypeptide reads, in one-letter code: Beta-defensin 20 (96 aa).

The N-terminal stretch at methionine 1–proline 21 is a signal peptide. Intrachain disulfides connect cysteine 24-cysteine 52, cysteine 32-cysteine 46, and cysteine 36-cysteine 53.

Belongs to the beta-defensin family.

Its subcellular location is the secreted. Has antibacterial activity. The chain is Beta-defensin 20 (Defb20) from Rattus norvegicus (Rat).